Reading from the N-terminus, the 57-residue chain is uncharacterized protein (57 aa).

A helical transmembrane segment spans residues 34–51 (TALLDAAAVVVVPGLLAA).

It localises to the membrane. This is an uncharacterized protein from Dictyostelium discoideum (Social amoeba).